The following is a 306-amino-acid chain: MTTNDAGTGNPAEQPARGAKQQPATETSRAGRDLRAAIVVGLSIGLVLIAVLVFVPRVWVAIVAVATLVATHEVVRRLREAGYLIPVIPLLIGGQAAVWLTWPFGAVGALAGFGGMVVVCMIWRLFMQDSVTRPTTGGAPSPGNYLSDVSATVFLAVWVPLFCSFGAMLVYPENGSGWVFCMMIAVIASDVGGYAVGVLFGKHPMVPTISPKKSWEGFAGSLVCGITATIITATFLVGKTPWIGALLGVLFVLTTALGDLVESQVKRDLGIKDMGRLLPGHGGLMDRLDGILPSAVAAWIVLTLLP.

The interval 1–28 is disordered; it reads MTTNDAGTGNPAEQPARGAKQQPATETS. Transmembrane regions (helical) follow at residues 36–56, 82–102, 103–123, 151–171, 180–200, 218–238, 241–261, and 285–305; these read AAIVVGLSIGLVLIAVLVFVP, GYLIPVIPLLIGGQAAVWLTW, PFGAVGALAGFGGMVVVCMIW, ATVFLAVWVPLFCSFGAMLVY, FCMMIAVIASDVGGYAVGVLF, FAGSLVCGITATIITATFLVG, PWIGALLGVLFVLTTALGDLV, and MDRLDGILPSAVAAWIVLTLL.

It belongs to the CDS family.

It localises to the cell membrane. It carries out the reaction a 1,2-diacyl-sn-glycero-3-phosphate + CTP + H(+) = a CDP-1,2-diacyl-sn-glycerol + diphosphate. Its pathway is phospholipid metabolism; CDP-diacylglycerol biosynthesis; CDP-diacylglycerol from sn-glycerol 3-phosphate: step 3/3. In Mycobacterium bovis (strain ATCC BAA-935 / AF2122/97), this protein is Phosphatidate cytidylyltransferase (cdsA).